A 188-amino-acid chain; its full sequence is Acireductone dioxygenase (188 aa).

The Fe(2+) site is built by H97, H99, E103, and H141. Ni(2+)-binding residues include H97, H99, E103, and H141.

This sequence belongs to the acireductone dioxygenase (ARD) family. As to quaternary structure, monomer. Requires Fe(2+) as cofactor. The cofactor is Ni(2+).

It catalyses the reaction 1,2-dihydroxy-5-(methylsulfanyl)pent-1-en-3-one + O2 = 3-(methylsulfanyl)propanoate + CO + formate + 2 H(+). The catalysed reaction is 1,2-dihydroxy-5-(methylsulfanyl)pent-1-en-3-one + O2 = 4-methylsulfanyl-2-oxobutanoate + formate + 2 H(+). The protein operates within amino-acid biosynthesis; L-methionine biosynthesis via salvage pathway; L-methionine from S-methyl-5-thio-alpha-D-ribose 1-phosphate: step 5/6. In terms of biological role, catalyzes 2 different reactions between oxygen and the acireductone 1,2-dihydroxy-3-keto-5-methylthiopentene (DHK-MTPene) depending upon the metal bound in the active site. Fe-containing acireductone dioxygenase (Fe-ARD) produces formate and 2-keto-4-methylthiobutyrate (KMTB), the alpha-ketoacid precursor of methionine in the methionine recycle pathway. Ni-containing acireductone dioxygenase (Ni-ARD) produces methylthiopropionate, carbon monoxide and formate, and does not lie on the methionine recycle pathway. The chain is Acireductone dioxygenase from Xanthomonas axonopodis pv. citri (strain 306).